We begin with the raw amino-acid sequence, 379 residues long: MIISSSTDYREAARRRLPPFLFHYIDGGAYSEHTMRRNIDDLADLALRQRVLKSVGTVDISTTLFDEELAMPVVLAPVGLTGMYARRGEVQAARAAEKKGIPLTLSTVSVCPIEEVQAASNRPIWFQLYVLRDRGFMKNALERAWAAGIRKLVFTVDMPVPGARYRDAHSGMSGPNASLRRIIQAVMHPTWAIDVGLLGKPHDLGNVSAYRQQKTNLADYVGWLGENFDPSIGWKDLEWIRDFWKGPMIIKGILDPEDAKDAVRFGADGIIVSNHGGRQLDGVLSSARALPAIAAAVKGDLTILADSGIRSGLDVVRMIAQGADGVLIGRAFVYALAAAGQAGVENLLDLFAKEMRVAMTLTGARSIAEISPDSLVRGL.

An FMN hydroxy acid dehydrogenase domain is found at M1–L379. Substrate is bound at residue Y24. Positions 106 and 127 each coordinate FMN. Y129 contributes to the substrate binding site. T155 is a binding site for FMN. R164 serves as a coordination point for substrate. K251 serves as a coordination point for FMN. H275 (proton acceptor) is an active-site residue. Residue R278 coordinates substrate. D306–R330 contributes to the FMN binding site.

The protein belongs to the FMN-dependent alpha-hydroxy acid dehydrogenase family. FMN is required as a cofactor.

It is found in the cell inner membrane. The enzyme catalyses (S)-lactate + A = pyruvate + AH2. Functionally, catalyzes the conversion of L-lactate to pyruvate. Is coupled to the respiratory chain. The chain is L-lactate dehydrogenase from Allorhizobium ampelinum (strain ATCC BAA-846 / DSM 112012 / S4) (Agrobacterium vitis (strain S4)).